A 393-amino-acid polypeptide reads, in one-letter code: Dihydrolipoyllysine-residue succinyltransferase component of 2-oxoglutarate dehydrogenase complex (393 aa).

The Lipoyl-binding domain occupies R3–V78. K44 carries the N6-lipoyllysine modification. Active-site residues include H364 and D368.

It belongs to the 2-oxoacid dehydrogenase family. Forms a 24-polypeptide structural core with octahedral symmetry. Part of the 2-oxoglutarate dehydrogenase (OGDH) complex composed of E1 (2-oxoglutarate dehydrogenase), E2 (dihydrolipoamide succinyltransferase) and E3 (dihydrolipoamide dehydrogenase); the complex contains multiple copies of the three enzymatic components (E1, E2 and E3). (R)-lipoate is required as a cofactor.

It carries out the reaction N(6)-[(R)-dihydrolipoyl]-L-lysyl-[protein] + succinyl-CoA = N(6)-[(R)-S(8)-succinyldihydrolipoyl]-L-lysyl-[protein] + CoA. It participates in amino-acid degradation; L-lysine degradation via saccharopine pathway; glutaryl-CoA from L-lysine: step 6/6. E2 component of the 2-oxoglutarate dehydrogenase (OGDH) complex which catalyzes the second step in the conversion of 2-oxoglutarate to succinyl-CoA and CO(2). The polypeptide is Dihydrolipoyllysine-residue succinyltransferase component of 2-oxoglutarate dehydrogenase complex (sucB) (Buchnera aphidicola subsp. Schizaphis graminum (strain Sg)).